Consider the following 316-residue polypeptide: MSNKLEQLRKLTTVVADTGEIDAIKKYQPEDATTNPSLILKAAQIAEYAPLIDASIEYAKTQSDDKAQQIQDTCDMLAVNIGKEILKTIPGRISTEVDARLSYDMEGSVAKARQLVKMYNDAGITNDRILIKLASTWEGIRAAEILEKEGINCNLTLLFSFAQARACAEAGVFLISPFVGRIMDWYKAKEGRDFEAQEDPGVLSVTKIYNYYKEYGYKTVVMGASFRNIGEILELAGCDRLTIAPALLAELEAAEGEVVEKLVDSKGAAERPAPMTHAEFLWEHNQDPMAVEKLAEGIRNFAVDQGKLEAMIAAKL.

The Schiff-base intermediate with substrate role is filled by K132.

It belongs to the transaldolase family. Type 1 subfamily. Homodimer.

It is found in the cytoplasm. It catalyses the reaction D-sedoheptulose 7-phosphate + D-glyceraldehyde 3-phosphate = D-erythrose 4-phosphate + beta-D-fructose 6-phosphate. It functions in the pathway carbohydrate degradation; pentose phosphate pathway; D-glyceraldehyde 3-phosphate and beta-D-fructose 6-phosphate from D-ribose 5-phosphate and D-xylulose 5-phosphate (non-oxidative stage): step 2/3. Its function is as follows. Transaldolase is important for the balance of metabolites in the pentose-phosphate pathway. The sequence is that of Transaldolase from Vibrio vulnificus (strain YJ016).